The following is a 292-amino-acid chain: MAFMKKYLLPILGLFMAYYYYSANEEFRPEMLQGKKVIVTGASKGIGREMAYHLAKMGAHVVVTARSKETLQKVVSHCLELGAASAHYIAGTMEDMTFAEQFVAQAGKLMGGLDMLILNHITNTSLNLFHDDIHHVRKSMEVNFLSYVVLTVAALPMLKQSNGSIVVVSSLAGKVAYPMVAAYSASKFALDGFFSSIRKEYSVSRVNVSITLCVLGLIDTETAMKAVSGIVHMQAAPKEECALEIIKGGALRQEEVYYDSSLWTTLLIRNPCRKILEFLYSTSYNMDRFINK.

Residues 1-7 are Cytoplasmic-facing; the sequence is MAFMKKY. Residues 8–24 form a helical; Signal-anchor for type II membrane protein membrane-spanning segment; that stretch reads LLPILGLFMAYYYYSAN. Topologically, residues 25–292 are lumenal; sequence EEFRPEMLQG…SYNMDRFINK (268 aa). NADP(+)-binding positions include 41–67, 92–93, and 119–121; these read GASKGIGREMAYHLAKMGAHVVVTARS, TM, and NHI. N-linked (GlcNAc...) asparagine glycans are attached at residues Asn-123 and Asn-162. Ser-170 is a substrate binding site. The active-site Proton acceptor is Tyr-183. Position 183–187 (183–187) interacts with NADP(+); it reads YSASK. Asn-207 carries an N-linked (GlcNAc...) asparagine glycan. 218–222 lines the NADP(+) pocket; the sequence is IDTET.

Belongs to the short-chain dehydrogenases/reductases (SDR) family. As to quaternary structure, homodimer. Post-translationally, glycosylated. As to expression, widely expressed, highest expression in liver, lower in testis, ovary, lung, foreskin fibroblasts, and much lower in kidney. Expressed in liver (at protein level). Expressed in the basal cells of the corneal epithelium and in the ciliary nonpigmented epithelium (both at mRNA and at protein level).

It is found in the endoplasmic reticulum membrane. The catalysed reaction is an 11beta-hydroxysteroid + NADP(+) = an 11-oxosteroid + NADPH + H(+). It carries out the reaction cortisone + NADPH + H(+) = cortisol + NADP(+). The enzyme catalyses corticosterone + NADP(+) = 11-dehydrocorticosterone + NADPH + H(+). It catalyses the reaction a 7beta-hydroxysteroid + NADP(+) = a 7-oxosteroid + NADPH + H(+). The catalysed reaction is 7-oxocholesterol + NADPH + H(+) = 7beta-hydroxycholesterol + NADP(+). It carries out the reaction chenodeoxycholate + NADP(+) = 7-oxolithocholate + NADPH + H(+). The enzyme catalyses 7-oxolithocholate + NADPH + H(+) = ursodeoxycholate + NADP(+). It catalyses the reaction glycochenodeoxycholate + NADP(+) = 7-oxoglycolithocholate + NADPH + H(+). The catalysed reaction is taurochenodeoxycholate + NADP(+) = 7-oxotaurolithocholate + NADPH + H(+). It carries out the reaction tauroursodeoxycholate + NADP(+) = 7-oxotaurolithocholate + NADPH + H(+). The enzyme catalyses glycoursodeoxycholate + NADP(+) = 7-oxoglycolithocholate + NADPH + H(+). It catalyses the reaction 7-oxopregnenolone + NADPH + H(+) = 7beta-hydroxypregnenolone + NADP(+). The catalysed reaction is 3beta,7alpha-dihydroxyandrost-5-en-17-one + NADP(+) = 3beta-hydroxy-5-androstene-7,17-dione + NADPH + H(+). It carries out the reaction 3beta-hydroxy-5-androstene-7,17-dione + NADPH + H(+) = 3beta,7beta-dihydroxyandrost-5-en-17-one + NADP(+). The enzyme catalyses 3beta-hydroxy-5alpha-androstane-7,17-dione + NADPH + H(+) = 3beta,7beta-dihydroxy-5alpha-androstan-17-one + NADP(+). The protein operates within steroid metabolism. With respect to regulation, hexose-6-phosphate dehydrogenase (H6PD) provides cosubstrate NADPH, and the glucose-6-phosphate transporter in the ER-membrane supplies the substrate for H6PDH, their activities stimulate the reduction of cortisone and abolish the oxidation of cortisol. Its function is as follows. Controls the reversible conversion of biologically active glucocorticoids such as cortisone to cortisol, and 11-dehydrocorticosterone to corticosterone in the presence of NADP(H). Participates in the corticosteroid receptor-mediated anti-inflammatory response, as well as metabolic and homeostatic processes. Plays a role in the secretion of aqueous humor in the eye, maintaining a normotensive, intraocular environment. Bidirectional in vitro, predominantly functions as a reductase in vivo, thereby increasing the concentration of active glucocorticoids. It has broad substrate specificity, besides glucocorticoids, it accepts other steroid and sterol substrates. Interconverts 7-oxo- and 7-hydroxy-neurosteroids such as 7-oxopregnenolone and 7beta-hydroxypregnenolone, 7-oxodehydroepiandrosterone (3beta-hydroxy-5-androstene-7,17-dione) and 7beta-hydroxydehydroepiandrosterone (3beta,7beta-dihydroxyandrost-5-en-17-one), among others. Catalyzes the stereo-specific conversion of the major dietary oxysterol, 7-ketocholesterol (7-oxocholesterol), into the more polar 7-beta-hydroxycholesterol metabolite. 7-oxocholesterol is one of the most important oxysterols, it participates in several events such as induction of apoptosis, accumulation in atherosclerotic lesions, lipid peroxidation, and induction of foam cell formation. Mediates the 7-oxo reduction of 7-oxolithocholate mainly to chenodeoxycholate, and to a lesser extent to ursodeoxycholate, both in its free form and when conjugated to glycine or taurine, providing a link between glucocorticoid activation and bile acid metabolism. Catalyzes the synthesis of 7-beta-25-dihydroxycholesterol from 7-oxo-25-hydroxycholesterol in vitro, which acts as a ligand for the G-protein-coupled receptor (GPCR) Epstein-Barr virus-induced gene 2 (EBI2) and may thereby regulate immune cell migration. This Homo sapiens (Human) protein is 11-beta-hydroxysteroid dehydrogenase 1.